Reading from the N-terminus, the 310-residue chain is p-hydroxybenzoic acid efflux pump subunit AaeA (310 aa).

The helical transmembrane segment at 12–32 (AITVALVILAFIAISRAWVFY) threads the bilayer.

This sequence belongs to the membrane fusion protein (MFP) (TC 8.A.1) family.

It localises to the cell inner membrane. Functionally, forms an efflux pump with AaeB. The sequence is that of p-hydroxybenzoic acid efflux pump subunit AaeA from Enterobacter sp. (strain 638).